The sequence spans 276 residues: uncharacterized protein (276 aa).

Positions 1-19 (MKKWLICSFVLVLLVSFTA) are cleaved as a signal peptide. C20 carries N-palmitoyl cysteine lipidation. C20 is lipidated: S-diacylglycerol cysteine.

This sequence belongs to the NlpA lipoprotein family.

Its subcellular location is the cell membrane. This is an uncharacterized protein from Bacillus subtilis (strain 168).